Consider the following 416-residue polypeptide: Homeobox even-skipped homolog protein 1 (416 aa).

Disordered regions lie at residues 30 to 120 (AVSS…SDFY) and 138 to 178 (YQHS…LACS). The span at 72 to 82 (GLAGSAAGLGA) shows a compositional bias: low complexity. The span at 102–114 (DSLSGQGQPSSSD) shows a compositional bias: polar residues. The homeobox DNA-binding region spans 183 to 242 (MRRYRTAFTREQIARLEKEFYRENYVSRPRRCELAAALNLPETTIKVWFQNRRMKDKRQR).

Belongs to the even-skipped homeobox family.

The protein resides in the nucleus. Functionally, may play a role in the specification of neuronal cell types. May play a role in the dorsoventral specification of mesodermal cell fate. The sequence is that of Homeobox even-skipped homolog protein 1 (Evx1) from Mus musculus (Mouse).